Reading from the N-terminus, the 101-residue chain is NADH-quinone oxidoreductase subunit K (101 aa).

Helical transmembrane passes span 4 to 24, 30 to 50, and 62 to 82; these read LGHL…GIFL, IVLL…FIAF, and FVFF…AILV.

Belongs to the complex I subunit 4L family. In terms of assembly, NDH-1 is composed of 14 different subunits. Subunits NuoA, H, J, K, L, M, N constitute the membrane sector of the complex.

The protein localises to the cell inner membrane. It carries out the reaction a quinone + NADH + 5 H(+)(in) = a quinol + NAD(+) + 4 H(+)(out). Its function is as follows. NDH-1 shuttles electrons from NADH, via FMN and iron-sulfur (Fe-S) centers, to quinones in the respiratory chain. The immediate electron acceptor for the enzyme in this species is believed to be ubiquinone. Couples the redox reaction to proton translocation (for every two electrons transferred, four hydrogen ions are translocated across the cytoplasmic membrane), and thus conserves the redox energy in a proton gradient. The protein is NADH-quinone oxidoreductase subunit K of Xanthomonas axonopodis pv. citri (strain 306).